A 156-amino-acid polypeptide reads, in one-letter code: Small ribosomal subunit protein uS7 (156 aa).

It belongs to the universal ribosomal protein uS7 family. Part of the 30S ribosomal subunit. Contacts proteins S9 and S11.

One of the primary rRNA binding proteins, it binds directly to 16S rRNA where it nucleates assembly of the head domain of the 30S subunit. Is located at the subunit interface close to the decoding center, probably blocks exit of the E-site tRNA. The polypeptide is Small ribosomal subunit protein uS7 (Shewanella amazonensis (strain ATCC BAA-1098 / SB2B)).